Reading from the N-terminus, the 246-residue chain is Ribonuclease 3 (246 aa).

The 130-residue stretch at 18–147 folds into the RNase III domain; the sequence is FKELQKKIGI…FIGALYLDQG (130 aa). E60 is a binding site for Mg(2+). Residue D64 is part of the active site. Positions 133 and 136 each coordinate Mg(2+). E136 is an active-site residue. Residues 173-242 form the DRBM domain; the sequence is DFKSQLQELV…AQMALQKLKT (70 aa).

The protein belongs to the ribonuclease III family. In terms of assembly, homodimer. Mg(2+) is required as a cofactor.

The protein resides in the cytoplasm. It carries out the reaction Endonucleolytic cleavage to 5'-phosphomonoester.. Digests double-stranded RNA. Involved in the processing of primary rRNA transcript to yield the immediate precursors to the large and small rRNAs (23S and 16S). Processes some mRNAs, and tRNAs when they are encoded in the rRNA operon. Processes pre-crRNA and tracrRNA of type II CRISPR loci if present in the organism. This is Ribonuclease 3 from Geobacillus sp. (strain WCH70).